Here is a 217-residue protein sequence, read N- to C-terminus: 7-cyano-7-deazaguanine synthase (217 aa).

10-20 (FSGGQDSTTCL) provides a ligand contact to ATP. Zn(2+) contacts are provided by C185, C194, C197, and C200.

This sequence belongs to the QueC family. As to quaternary structure, homodimer. It depends on Zn(2+) as a cofactor.

It carries out the reaction 7-carboxy-7-deazaguanine + NH4(+) + ATP = 7-cyano-7-deazaguanine + ADP + phosphate + H2O + H(+). Its pathway is purine metabolism; 7-cyano-7-deazaguanine biosynthesis. Functionally, catalyzes the ATP-dependent conversion of 7-carboxy-7-deazaguanine (CDG) to 7-cyano-7-deazaguanine (preQ(0)). The polypeptide is 7-cyano-7-deazaguanine synthase (Streptococcus mutans serotype c (strain ATCC 700610 / UA159)).